The chain runs to 283 residues: Phosphatidylserine decarboxylase proenzyme (283 aa).

Catalysis depends on charge relay system; for autoendoproteolytic cleavage activity residues aspartate 96, histidine 152, and serine 250. The active-site Schiff-base intermediate with substrate; via pyruvic acid; for decarboxylase activity is serine 250. Serine 250 is modified (pyruvic acid (Ser); by autocatalysis).

This sequence belongs to the phosphatidylserine decarboxylase family. PSD-B subfamily. Prokaryotic type I sub-subfamily. Heterodimer of a large membrane-associated beta subunit and a small pyruvoyl-containing alpha subunit. The cofactor is pyruvate. Is synthesized initially as an inactive proenzyme. Formation of the active enzyme involves a self-maturation process in which the active site pyruvoyl group is generated from an internal serine residue via an autocatalytic post-translational modification. Two non-identical subunits are generated from the proenzyme in this reaction, and the pyruvate is formed at the N-terminus of the alpha chain, which is derived from the carboxyl end of the proenzyme. The autoendoproteolytic cleavage occurs by a canonical serine protease mechanism, in which the side chain hydroxyl group of the serine supplies its oxygen atom to form the C-terminus of the beta chain, while the remainder of the serine residue undergoes an oxidative deamination to produce ammonia and the pyruvoyl prosthetic group on the alpha chain. During this reaction, the Ser that is part of the protease active site of the proenzyme becomes the pyruvoyl prosthetic group, which constitutes an essential element of the active site of the mature decarboxylase.

Its subcellular location is the cell membrane. The catalysed reaction is a 1,2-diacyl-sn-glycero-3-phospho-L-serine + H(+) = a 1,2-diacyl-sn-glycero-3-phosphoethanolamine + CO2. The protein operates within phospholipid metabolism; phosphatidylethanolamine biosynthesis; phosphatidylethanolamine from CDP-diacylglycerol: step 2/2. Its function is as follows. Catalyzes the formation of phosphatidylethanolamine (PtdEtn) from phosphatidylserine (PtdSer). The chain is Phosphatidylserine decarboxylase proenzyme from Acinetobacter baumannii (strain ATCC 17978 / DSM 105126 / CIP 53.77 / LMG 1025 / NCDC KC755 / 5377).